A 139-amino-acid chain; its full sequence is Acidic phospholipase A2 BpPLA2-TXI (139 aa).

A signal peptide spans 1 to 16 (MRTLWIMAVLLVGVEG). An intrachain disulfide couples Cys44 to Cys60. Ca(2+) contacts are provided by Gly45 and Gly47. Residue His63 is part of the active site. Position 64 (Asp64) interacts with Ca(2+). 3 disulfide bridges follow: Cys65-Cys139, Cys73-Cys97, and Cys91-Cys102.

It belongs to the phospholipase A2 family. Group II subfamily. D49 sub-subfamily. The cofactor is Ca(2+). As to expression, expressed by the venom gland.

The protein resides in the secreted. The catalysed reaction is a 1,2-diacyl-sn-glycero-3-phosphocholine + H2O = a 1-acyl-sn-glycero-3-phosphocholine + a fatty acid + H(+). PLA2 catalyzes the calcium-dependent hydrolysis of the 2-acyl groups in 3-sn-phosphoglycerides. This Bothrops pauloensis (Neuwied's lancehead) protein is Acidic phospholipase A2 BpPLA2-TXI.